A 450-amino-acid chain; its full sequence is Caspase Dronc (450 aa).

Residues 1–134 (MQPPELEIGM…RTSRKSADIV (134 aa)) constitute a propeptide that is removed on maturation. In terms of domain architecture, CARD spans 64-109 (EKDVRVEQHRRLLLKITQRGPTAYNLLINALRNINCLDAAVLLESV). Positions 114 to 125 (SRPPFISLNERR) are required for binding Diap1. Active-site residues include histidine 271 and cysteine 318. A propeptide spanning residues 321 to 324 (DEYD) is cleaved from the precursor.

This sequence belongs to the peptidase C14A family. In terms of assembly, interacts (via residues 114-125) with Diap1 (via BIR 2 domain); binding blocks Dronc-mediated cell death. Can form a stable complex with Drice. Rpr, hid and grim can out-compete Dronc for binding Diap1, therefore removing Diap1-mediated ubiquitination. Interacts (via CARD domain) with Dark (via Dark CARD and WD domains); the interaction stimulates Dark oligomerization to form the apoptosome and brings pairs of Dronc molecules together on the apoptosome to facilitate their dimerization and activation by autocatalytic cleavage. Binding to Dark stimulates apoptosome assembly. After autocatalytic cleavage the Dronc caspase domain dissociates from the apoptosome but the CARD domain remains associated. In terms of processing, ubiquitinated by Diap1, leading to its subsequent degradation. Ubiquitously expressed in embryos during early stages of development. In late third instar larvae, dramatic up-regulation in salivary glands and midgut before histolysis of these tissues.

The protein localises to the cytoplasm. The enzyme catalyses Strict requirement for an Asp residue at position P1 and with a marked preference for His at position P2. It has a preferred cleavage sequence of Leu-Gly-His-Asp-|-Xaa.. With respect to regulation, zymogen activated by autocatalytic cleavage; association with the Dark apoptosome brings multiple molecules together to facilitate their dimerization and activation by autocatalytic cleavage. In terms of biological role, involved in the activation cascade of caspases responsible for apoptosis execution. Effector of steroid-mediated apoptosis during insect metamorphosis. Overexpression promotes programmed cell death. Interaction with Diap1 is required to suppress Dronc-mediated cell death; via Diap1-mediated ubiquitination of Dronc. Rate-limiting caspase in rpr, grim and hid death pathway. Recruited to the Dark apoptosome, an adapter protein complex that mediates activation of the caspase cascade in programmed cell death initiated by the intrinsic apoptosis pathway. Association with the Dark apoptosome stimulates autocatalytic cleavage and activation of Dronc, promoting Dronc-mediated cleavage of downstream effector caspases such as Drice. The protein is Caspase Dronc of Drosophila melanogaster (Fruit fly).